Consider the following 80-residue polypeptide: Raniseptin-5 (80 aa).

The N-terminal stretch at 1-22 is a signal peptide; that stretch reads MAFLKKSLFLVLFLGIVSLSIC. The propeptide occupies 23–49; sequence EEEKREGEEEEKQEEENEELSEEELRE.

It belongs to the frog skin active peptide (FSAP) family. Dermaseptin subfamily. As to expression, expressed by the skin glands.

The protein localises to the secreted. In terms of biological role, has antibacterial activity. The polypeptide is Raniseptin-5 (Boana raniceps (Chaco tree frog)).